Here is a 265-residue protein sequence, read N- to C-terminus: UPF0026 protein slr1464 (265 aa).

The 237-residue stretch at 16 to 252 (RYGRSLGIDP…QNLAKKISGA (237 aa)) folds into the Radical SAM core domain. 3 residues coordinate [4Fe-4S] cluster: Cys-32, Cys-36, and Cys-39. A disordered region spans residues 204–230 (RPTRPKPLQRELEGRGNHTGTPYGDRP).

The protein belongs to the UPF0026 family. The cofactor is [4Fe-4S] cluster.

This Synechocystis sp. (strain ATCC 27184 / PCC 6803 / Kazusa) protein is UPF0026 protein slr1464.